The sequence spans 587 residues: Putative phagocytic receptor 1b (587 aa).

A signal peptide spans 1–23 (MRLQILLIYLICIIVSSIVLVES). A run of 9 helical transmembrane segments spans residues 223–243 (LSVMNSFFLVVLLTAFLAIMI), 294–314 (IGWQFISIVCGILALSLFGMF), 319–339 (GGNMYTAGIVLYALTSGISGY), 354–374 (AWNIVLTATLFVAPLFIVVIL), 390–410 (ILTMIEVITIWLFVGFPLTVV), 448–468 (ILIAGFLPFSAIYIELFYIFN), 480–500 (GILCLVFLILINVTVCITVAL), 524–544 (VVFIYMYSIYYYYYISHMYGL), and 556–576 (IVCFFFFILLGTVGFYSSLIF).

This sequence belongs to the nonaspanin (TM9SF) (TC 9.A.2) family.

The protein resides in the membrane. Functionally, involved in adhesion and phagocytosis of hydrophilic particles. The polypeptide is Putative phagocytic receptor 1b (phg1b) (Dictyostelium discoideum (Social amoeba)).